The following is a 545-amino-acid chain: ATP synthase subunit alpha (545 aa).

Residue 172–179 (GDRKTGKT) participates in ATP binding.

This sequence belongs to the ATPase alpha/beta chains family. F-type ATPases have 2 components, CF(1) - the catalytic core - and CF(0) - the membrane proton channel. CF(1) has five subunits: alpha(3), beta(3), gamma(1), delta(1), epsilon(1). CF(0) has three main subunits: a(1), b(2) and c(9-12). The alpha and beta chains form an alternating ring which encloses part of the gamma chain. CF(1) is attached to CF(0) by a central stalk formed by the gamma and epsilon chains, while a peripheral stalk is formed by the delta and b chains.

It localises to the cell membrane. It carries out the reaction ATP + H2O + 4 H(+)(in) = ADP + phosphate + 5 H(+)(out). In terms of biological role, produces ATP from ADP in the presence of a proton gradient across the membrane. The alpha chain is a regulatory subunit. This Corynebacterium urealyticum (strain ATCC 43042 / DSM 7109) protein is ATP synthase subunit alpha.